A 102-amino-acid polypeptide reads, in one-letter code: NADH-quinone oxidoreductase subunit K (102 aa).

3 consecutive transmembrane segments (helical) span residues 5–25 (LEHY…GIFL), 31–51 (IVIL…LVAF), and 66–86 (FVLT…VVFF).

The protein belongs to the complex I subunit 4L family. In terms of assembly, NDH-1 is composed of 14 different subunits. Subunits NuoA, H, J, K, L, M, N constitute the membrane sector of the complex.

It is found in the cell inner membrane. It carries out the reaction a quinone + NADH + 5 H(+)(in) = a quinol + NAD(+) + 4 H(+)(out). NDH-1 shuttles electrons from NADH, via FMN and iron-sulfur (Fe-S) centers, to quinones in the respiratory chain. The immediate electron acceptor for the enzyme in this species is believed to be ubiquinone. Couples the redox reaction to proton translocation (for every two electrons transferred, four hydrogen ions are translocated across the cytoplasmic membrane), and thus conserves the redox energy in a proton gradient. This is NADH-quinone oxidoreductase subunit K from Parvibaculum lavamentivorans (strain DS-1 / DSM 13023 / NCIMB 13966).